Reading from the N-terminus, the 144-residue chain is Flagellar assembly factor FliW (144 aa).

The protein belongs to the FliW family. As to quaternary structure, interacts with translational regulator CsrA and flagellin(s).

It is found in the cytoplasm. Functionally, acts as an anti-CsrA protein, binds CsrA and prevents it from repressing translation of its target genes, one of which is flagellin. Binds to flagellin and participates in the assembly of the flagellum. This is Flagellar assembly factor FliW from Geobacillus kaustophilus (strain HTA426).